A 382-amino-acid chain; its full sequence is tRNA-specific 2-thiouridylase MnmA (382 aa).

Residues 18-25 (AMSGGVDS) and Leu44 each bind ATP. Catalysis depends on Cys112, which acts as the Nucleophile. An intrachain disulfide couples Cys112 to Cys209. Gly136 is a binding site for ATP. The segment at 159 to 161 (RDQ) is interaction with tRNA. The Cysteine persulfide intermediate role is filled by Cys209.

Belongs to the MnmA/TRMU family.

The protein resides in the cytoplasm. It carries out the reaction S-sulfanyl-L-cysteinyl-[protein] + uridine(34) in tRNA + AH2 + ATP = 2-thiouridine(34) in tRNA + L-cysteinyl-[protein] + A + AMP + diphosphate + H(+). Functionally, catalyzes the 2-thiolation of uridine at the wobble position (U34) of tRNA, leading to the formation of s(2)U34. The protein is tRNA-specific 2-thiouridylase MnmA of Methylobacterium sp. (strain 4-46).